Reading from the N-terminus, the 681-residue chain is Propionyl-CoA carboxylase alpha chain (681 aa).

The Biotin carboxylation domain occupies 1–466; sequence MFNKILIANR…TTAFIAEEYP (466 aa). ATP is bound by residues Lys116, 148–209, Glu200, and Asn235; that span reads SNQI…PRHI. Residues 120 to 317 form the ATP-grasp domain; sequence KKIAQEANVS…LVEQMIRVAA (198 aa). Positions 275, 288, and 290 each coordinate Mg(2+). Mn(2+) is bound by residues Glu275, Glu288, and Asn290. Glu288 is a catalytic residue. Phe348 contributes to the biotin binding site. In terms of domain architecture, Biotinyl-binding spans 602 to 681; the sequence is LMPEKLPPDT…AVDDVIMEFE (80 aa). Lys647 bears the N6-biotinyllysine mark.

As to quaternary structure, the holoenzyme is a dodecamer composed of 6 PccA/alpha subunits and 6 PccB/beta subunits. Mg(2+) serves as cofactor. Requires Mn(2+) as cofactor. Biotin is required as a cofactor. In terms of processing, the biotin cofactor is covalently attached to the C-terminal biotinyl-binding domain and is required for the catalytic activity.

It catalyses the reaction propanoyl-CoA + hydrogencarbonate + ATP = (S)-methylmalonyl-CoA + ADP + phosphate + H(+). It functions in the pathway metabolic intermediate metabolism; propanoyl-CoA degradation; succinyl-CoA from propanoyl-CoA: step 1/3. In terms of biological role, this is one of the 2 subunits of the biotin-dependent propionyl-CoA carboxylase (PCC), the enzyme catalyzing the carboxylation of propionyl-CoA/propanoyl-CoA to D-methylmalonyl-CoA/(S)-methylmalonyl-CoA. Within the holoenzyme, the alpha subunit catalyzes the ATP-dependent carboxylation of the biotin carried by the biotin carboxyl carrier (BCC) domain, while the beta subunit then tranfers the carboxyl group from carboxylated biotin to propionyl-CoA. This Ruegeria pomeroyi (strain ATCC 700808 / DSM 15171 / DSS-3) (Silicibacter pomeroyi) protein is Propionyl-CoA carboxylase alpha chain.